The chain runs to 37 residues: MVEPLLSGIVLGLIPITLAGLFVTAYLQYRRGDQLDL.

A helical transmembrane segment spans residues 5–25 (LLSGIVLGLIPITLAGLFVTA).

Belongs to the PetG family. In terms of assembly, the 4 large subunits of the cytochrome b6-f complex are cytochrome b6, subunit IV (17 kDa polypeptide, PetD), cytochrome f and the Rieske protein, while the 4 small subunits are PetG, PetL, PetM and PetN. The complex functions as a dimer.

It localises to the plastid. The protein localises to the chloroplast thylakoid membrane. Functionally, component of the cytochrome b6-f complex, which mediates electron transfer between photosystem II (PSII) and photosystem I (PSI), cyclic electron flow around PSI, and state transitions. PetG is required for either the stability or assembly of the cytochrome b6-f complex. The polypeptide is Cytochrome b6-f complex subunit 5 (Zygnema circumcarinatum (Green alga)).